The primary structure comprises 432 residues: Queuine tRNA-ribosyltransferase accessory subunit 2 (432 aa).

Zn(2+) is bound by residues C329, C331, C334, and H360. Residues 390–432 (GQKSLPPYEPPKEEKLPMPAAQKAELMEPMEDLGEKQNKKQRA) are disordered. Residues 422-432 (LGEKQNKKQRA) are compositionally biased toward basic and acidic residues.

The protein belongs to the queuine tRNA-ribosyltransferase family. QTRT2 subfamily. In terms of assembly, heterodimer of a catalytic subunit and an accessory subunit. Zn(2+) serves as cofactor.

The protein resides in the cytoplasm. Non-catalytic subunit of the queuine tRNA-ribosyltransferase (TGT) that catalyzes the base-exchange of a guanine (G) residue with queuine (Q) at position 34 (anticodon wobble position) in tRNAs with GU(N) anticodons (tRNA-Asp, -Asn, -His and -Tyr), resulting in the hypermodified nucleoside queuosine (7-(((4,5-cis-dihydroxy-2-cyclopenten-1-yl)amino)methyl)-7-deazaguanosine). The chain is Queuine tRNA-ribosyltransferase accessory subunit 2 from Anopheles gambiae (African malaria mosquito).